Consider the following 363-residue polypeptide: Peptide chain release factor 1 (363 aa).

Residue Gln237 is modified to N5-methylglutamine.

It belongs to the prokaryotic/mitochondrial release factor family. Post-translationally, methylated by PrmC. Methylation increases the termination efficiency of RF1.

It is found in the cytoplasm. Functionally, peptide chain release factor 1 directs the termination of translation in response to the peptide chain termination codons UAG and UAA. This is Peptide chain release factor 1 from Marinobacter nauticus (strain ATCC 700491 / DSM 11845 / VT8) (Marinobacter aquaeolei).